A 296-amino-acid polypeptide reads, in one-letter code: MSSLRQIAFYGKGGIGKSTTSQNTLAALAEMGHRILIVGCDPKADSTRLILHAKAQDTILSLAAAAGSVEDLELEEVMKIGYRDIRCVESGGPEPGVGCAGRGVITSINFLEENGAYEDIDYVSYDVLGDVVCGGFAMPIRENKAQEIYIVMSGEMMAMYAANNISKGILKYANSGGVRLGGLVCNERQTDKELELAENLAKKLGTQLIYFVPRDNIVQHAELRRMTVIEYAPDSVQANHYRNLAERVHNNGGKGIIPTPITMDELEDMLMEHGIMKTVDESQVGKTAAELAALSA.

An ATP-binding site is contributed by 11–18 (GKGGIGKS). [4Fe-4S] cluster is bound at residue Cys99. Residue Arg102 is modified to ADP-ribosylarginine; by dinitrogenase reductase ADP-ribosyltransferase. Residue Cys133 coordinates [4Fe-4S] cluster.

The protein belongs to the NifH/BchL/ChlL family. Homodimer. The cofactor is [4Fe-4S] cluster. In terms of processing, the reversible ADP-ribosylation of Arg-102 inactivates the nitrogenase reductase and regulates nitrogenase activity.

The catalysed reaction is N2 + 8 reduced [2Fe-2S]-[ferredoxin] + 16 ATP + 16 H2O = H2 + 8 oxidized [2Fe-2S]-[ferredoxin] + 2 NH4(+) + 16 ADP + 16 phosphate + 6 H(+). In terms of biological role, the key enzymatic reactions in nitrogen fixation are catalyzed by the nitrogenase complex, which has 2 components: the iron protein and the molybdenum-iron protein. This chain is Nitrogenase iron protein 2 (nifH2), found in Azorhizobium caulinodans (strain ATCC 43989 / DSM 5975 / JCM 20966 / LMG 6465 / NBRC 14845 / NCIMB 13405 / ORS 571).